A 1112-amino-acid polypeptide reads, in one-letter code: Patronin (microtubule-binding protein) homolog (1112 aa).

The 122-residue stretch at 165-286 folds into the Calponin-homology (CH) domain; sequence IDSVDALLFW…VNAFLADLFV (122 aa). Disordered stretches follow at residues 324 to 358, 485 to 504, 542 to 566, and 788 to 834; these read AARSSMHNRNRPRMYNPPPAVSHSQGPSRSVSRMS, EGEDGTQSARLNRASSQPSV, MQQQMQQQQQQQAQAQSNYASPSQL, and NHSE…GSGE. 2 stretches are compositionally biased toward polar residues: residues 345 to 358 and 489 to 504; these read SHSQGPSRSVSRMS and GTQSARLNRASSQPSV. Positions 542–557 are enriched in low complexity; sequence MQQQMQQQQQQQAQAQ. The span at 802-816 shows a compositional bias: basic and acidic residues; it reads QNDRDDLSTGRKSDD. A coiled-coil region spans residues 850 to 914; sequence ALIAKTMKRK…YKRKKLEKEL (65 aa). A disordered region spans residues 916–965; sequence AELSARSTGRGHSQPPFIRTKSQMSEVTESSRQNTPRMRGQSSVEQRVSV. Residues 935–951 are compositionally biased toward polar residues; it reads TKSQMSEVTESSRQNTP. A compositionally biased stretch (low complexity) spans 956–965; that stretch reads QSSVEQRVSV. Residues 972-1109 form the CKK domain; the sequence is THKLYAKTVT…RIPHSGTPAH (138 aa).

Belongs to the CAMSAP1 family. In terms of assembly, interacts with dapk-1. In terms of tissue distribution, expressed in larval and adult epidermis, intestine and pharynx. Broadly expressed in the nervous system. Expressed in body wall muscle cells.

The protein resides in the cell projection. It is found in the axon. It localises to the dendrite. Its subcellular location is the cell membrane. The protein localises to the sarcolemma. The protein resides in the cytoplasm. It is found in the cytosol. It localises to the cytoskeleton. Its subcellular location is the perikaryon. Required for microtubule stability and anchorage by binding to the minus ends of microtubules. Acts redundantly with noca-1 to control circumferential microtubule assembly along the body which is necessary for larval development, viability, morphology and integrity of the epidermis. Promotes microtubule stability and polymerization in neurons. Involved in the maintenance of neurite morphology in ALM and PLM neurons. May play a role in synaptic protein localization in the PLM neuron. May act upstream of dlk-1 in neuronal regeneration. Plays a role in postembryonic epidermal tissue integrity and wound healing. This is Patronin (microtubule-binding protein) homolog from Caenorhabditis elegans.